A 31-amino-acid polypeptide reads, in one-letter code: MESAAYILVLALALGVIFFAIAFRDPPRIGK.

Residues 3-23 (SAAYILVLALALGVIFFAIAF) form a helical membrane-spanning segment.

The protein belongs to the PsbT family. As to quaternary structure, PSII is composed of 1 copy each of membrane proteins PsbA, PsbB, PsbC, PsbD, PsbE, PsbF, PsbH, PsbI, PsbJ, PsbK, PsbL, PsbM, PsbT, PsbX, PsbY, PsbZ, Psb30/Ycf12, peripheral proteins PsbO, CyanoQ (PsbQ), PsbU, PsbV and a large number of cofactors. It forms dimeric complexes.

It is found in the cellular thylakoid membrane. Its function is as follows. Found at the monomer-monomer interface of the photosystem II (PS II) dimer, plays a role in assembly and dimerization of PSII. PSII is a light-driven water plastoquinone oxidoreductase, using light energy to abstract electrons from H(2)O, generating a proton gradient subsequently used for ATP formation. In Trichodesmium erythraeum (strain IMS101), this protein is Photosystem II reaction center protein T.